Reading from the N-terminus, the 377-residue chain is E3 ubiquitin-protein ligase rififylin (377 aa).

An FYVE-type zinc finger spans residues 55–107 (TGSEPSCKACGVHFASTTRKQTCLDCKKNFCMTCSSQEGNGPRLCLLCLRFRA). The SAP 1 domain maps to 115–134 (LMKMKVKDLRDYLSLHDIST). Residues 176–249 (LTQPQTSTVP…SVDSEDSFVP (74 aa)) are disordered. Residues 190-212 (GLPSSPAQVTSVPLAQDQETQQA) show a composition bias toward polar residues. The span at 235–245 (EDETQSVDSED) shows a compositional bias: acidic residues. 4 positions are modified to phosphoserine: S240, S243, S246, and S254. In terms of domain architecture, SAP 2 spans 264–278 (IEGLTVRQLKEILAR). An RING-type zinc finger spans residues 330-365 (CKICMDSPIDCVLLECGHMVTCTKCGKRMNECPICR).

As to quaternary structure, interacts with CASP8 and CASP10. Interacts with RIPK1 (via protein kinase domain); involved in RIPK1 ubiquitination. Interacts with PRR5L. Interacts (via RING-type zinc finger) with p53/TP53; involved in p53/TP53 ubiquitination. Interacts (via RING-type zinc finger) with MDM2; the interaction stabilizes MDM2. Post-translationally, autoubiquitinated. In terms of processing, palmitoylated. Undergoes caspase-mediated cleavage upon death-receptor activation, by TNFSF10 for instance. May be mediated by the caspases CASP8 and CASP10 in a negative feedback loop. As to expression, ubiquitous. Detected in heart, brain, spleen, lung, liver, skeletal muscle, kidney, testis, thymus, whole embryo and embryonic stem cells.

Its subcellular location is the cytoplasm. It is found in the cytosol. The protein resides in the cell membrane. The protein localises to the recycling endosome membrane. It catalyses the reaction S-ubiquitinyl-[E2 ubiquitin-conjugating enzyme]-L-cysteine + [acceptor protein]-L-lysine = [E2 ubiquitin-conjugating enzyme]-L-cysteine + N(6)-ubiquitinyl-[acceptor protein]-L-lysine.. It functions in the pathway protein modification; protein ubiquitination. In terms of biological role, E3 ubiquitin-protein ligase that regulates several biological processes through the ubiquitin-mediated proteasomal degradation of various target proteins. Mediates 'Lys-48'-linked polyubiquitination of PRR5L and its subsequent proteasomal degradation thereby indirectly regulating cell migration through the mTORC2 complex. Also ubiquitinates the caspases CASP8 and CASP10, promoting their proteasomal degradation, to negatively regulate apoptosis downstream of death domain receptors. Also negatively regulates the tumor necrosis factor-mediated signaling pathway through targeting of RIPK1 to ubiquitin-mediated proteasomal degradation. Negatively regulates p53/TP53 through its direct ubiquitination and targeting to proteasomal degradation. Indirectly, may also negatively regulate p53/TP53 through ubiquitination and degradation of SFN. May also play a role in endocytic recycling. The sequence is that of E3 ubiquitin-protein ligase rififylin from Mus musculus (Mouse).